The following is a 195-amino-acid chain: dITP/XTP pyrophosphatase (195 aa).

8-13 (TNNQGK) is a binding site for substrate. Mg(2+) contacts are provided by Glu-39 and Asp-68. Asp-68 acts as the Proton acceptor in catalysis. Residues Ser-69, 149-152 (FGYD), Lys-172, and 177-178 (HR) each bind substrate.

This sequence belongs to the HAM1 NTPase family. Homodimer. Mg(2+) is required as a cofactor.

The catalysed reaction is XTP + H2O = XMP + diphosphate + H(+). It catalyses the reaction dITP + H2O = dIMP + diphosphate + H(+). It carries out the reaction ITP + H2O = IMP + diphosphate + H(+). Pyrophosphatase that catalyzes the hydrolysis of nucleoside triphosphates to their monophosphate derivatives, with a high preference for the non-canonical purine nucleotides XTP (xanthosine triphosphate), dITP (deoxyinosine triphosphate) and ITP. Seems to function as a house-cleaning enzyme that removes non-canonical purine nucleotides from the nucleotide pool, thus preventing their incorporation into DNA/RNA and avoiding chromosomal lesions. In Staphylococcus epidermidis (strain ATCC 35984 / DSM 28319 / BCRC 17069 / CCUG 31568 / BM 3577 / RP62A), this protein is dITP/XTP pyrophosphatase.